The chain runs to 310 residues: Glutamyl-Q tRNA(Asp) synthetase (310 aa).

L-glutamate is bound by residues 24-28 and Glu60; that span reads RFAPS. A 'HIGH' region motif is present at residues 27-37; the sequence is PSPSGPLHFGS. Residues Cys116, Cys118, Tyr130, and Cys134 each contribute to the Zn(2+) site. 2 residues coordinate L-glutamate: Tyr187 and Arg205. The short motif at 243–247 is the 'KMSKS' region element; sequence KLSKQ. Residue Lys246 participates in ATP binding.

Belongs to the class-I aminoacyl-tRNA synthetase family. GluQ subfamily. Requires Zn(2+) as cofactor.

Functionally, catalyzes the tRNA-independent activation of glutamate in presence of ATP and the subsequent transfer of glutamate onto a tRNA(Asp). Glutamate is transferred on the 2-amino-5-(4,5-dihydroxy-2-cyclopenten-1-yl) moiety of the queuosine in the wobble position of the QUC anticodon. This chain is Glutamyl-Q tRNA(Asp) synthetase, found in Photobacterium profundum (strain SS9).